Reading from the N-terminus, the 613-residue chain is Leucine aminopeptidase 2 (613 aa).

Residues 134–136 (QAQ) and 265–270 (PYGGME) contribute to the a peptide site. His-294 contacts Zn(2+). Glu-295 functions as the Proton acceptor in the catalytic mechanism. Residues His-298 and Glu-317 each contribute to the Zn(2+) site. Tyr-382 acts as the Proton donor in catalysis.

It belongs to the peptidase M1 family. Requires Zn(2+) as cofactor.

The protein localises to the cytoplasm. The protein resides in the nucleus. It carries out the reaction an epoxide + H2O = an ethanediol. Aminopeptidase that preferentially cleaves di- and tripeptides. Also has low epoxide hydrolase activity (in vitro). Can hydrolyze the epoxide leukotriene LTA(4) but it forms preferentially 5,6-dihydroxy-7,9,11,14-eicosatetraenoic acid rather than the cytokine leukotriene B(4) as the product compared to the homologous mammalian enzyme (in vitro). The sequence is that of Leucine aminopeptidase 2 from Pyricularia oryzae (strain 70-15 / ATCC MYA-4617 / FGSC 8958) (Rice blast fungus).